Here is a 217-residue protein sequence, read N- to C-terminus: HTH-type transcriptional regulator EthR (217 aa).

Residues Met-1 to Asp-22 are disordered. The 61-residue stretch at Asp-21–Ala-81 folds into the HTH tetR-type domain. The H-T-H motif DNA-binding region spans Ser-44–Phe-63.

Homodimer.

Its function is as follows. Involved in the repression of teh monooxygenase EthA which is responsible of the formation of the active metabolite of ethionamide (ETH). In Mycolicibacterium smegmatis (strain ATCC 700084 / mc(2)155) (Mycobacterium smegmatis), this protein is HTH-type transcriptional regulator EthR (ethR).